Reading from the N-terminus, the 130-residue chain is Small ribosomal subunit protein uS9 (130 aa).

Belongs to the universal ribosomal protein uS9 family.

This is Small ribosomal subunit protein uS9 (rpsI) from Shigella flexneri.